The sequence spans 882 residues: Liprin-beta-2 (882 aa).

A coiled-coil region spans residues 101-303 (AASNETYQER…DKDRRIEELT (203 aa)). Residues serine 328, serine 362, and serine 386 each carry the phosphoserine modification. Residues 339–554 (RKWNTTNKSP…SRTRDTKGQK (216 aa)) are disordered. The span at 388–399 (EDLRRESGDKCV) shows a compositional bias: basic and acidic residues. Composition is skewed to polar residues over residues 442 to 457 (PTAS…SQPK) and 481 to 495 (SSAS…QSPV). Residues serine 502 and serine 518 each carry the phosphoserine modification. Positions 502-515 (SPKGIKKFWGKIRR) are enriched in basic residues. 3 SAM domains span residues 564 to 628 (WSTE…INAK), 636 to 699 (LDHI…LHVN), and 724 to 789 (WSNH…KFNA).

The protein belongs to the liprin family. Liprin-beta subfamily. As to quaternary structure, forms homodimers and heterodimers. Expressed widely. Strong expression in liver, kidney, intestine, heart, lung and testis. Low expression in brain and thymus.

Its function is as follows. May regulate the disassembly of focal adhesions. Did not bind receptor-like tyrosine phosphatases type 2A. The sequence is that of Liprin-beta-2 (Ppfibp2) from Mus musculus (Mouse).